A 472-amino-acid polypeptide reads, in one-letter code: MAGQTLYDKLWNAHEVTKRDDGSSLIYIDRHLLHEVTSPQAFEGLELANRAPWRLSANIASPDHNVPTVTKERSEGVAGIKDKVSRLQVLTLDNNCAKFDIAEFTINDARQGILHVVGPEQGLVLPGMTVVCGDSHTATHGALGCLAHGIGTSEVEHVLATQCLIQKKSKNMQIRVTGELGVGVTSKDVVLAIIAKIGTAGGTGHAIEFAGQVFEDMSMEGRMTVCNMAIEAGARVGMVAVDDTTINYVKGRPYAPNESQWQQAEAYWRTFYSDDDAVFDSVVEIDGSQIAPQVSWGTSPEMVVDVTQSVPTLDQAIDEAQEEGWLRAYTYMGLEAGQKITDIQLDRIFIGSCTNSRIEDLRDAAAVIKGRKVADNIKEAIVVAGSGQVKLQAEAEGLDALFTDAGFEWREPGCSMCLAMNADKLEPQEHCASTSNRNFEGRQGNGGRTHLVSPAMAAAAALAGHFVDVRTF.

The [4Fe-4S] cluster site is built by Cys-353, Cys-414, and Cys-417.

It belongs to the aconitase/IPM isomerase family. LeuC type 1 subfamily. As to quaternary structure, heterodimer of LeuC and LeuD. The cofactor is [4Fe-4S] cluster.

It carries out the reaction (2R,3S)-3-isopropylmalate = (2S)-2-isopropylmalate. The protein operates within amino-acid biosynthesis; L-leucine biosynthesis; L-leucine from 3-methyl-2-oxobutanoate: step 2/4. Functionally, catalyzes the isomerization between 2-isopropylmalate and 3-isopropylmalate, via the formation of 2-isopropylmaleate. In Psychrobacter arcticus (strain DSM 17307 / VKM B-2377 / 273-4), this protein is 3-isopropylmalate dehydratase large subunit.